The sequence spans 974 residues: Hexokinase-1 (974 aa).

The segment at 1–42 (MGWGAPLLSRMLHGPGQAGETSPVPERQSGSENPASEDRRPL) is disordered. A mitochondrial-binding peptide (MBP) region spans residues 57–66 (CQRGQAVDVE). Hexokinase domains follow at residues 72 to 514 (PLTE…MVTA) and 520 to 962 (AEQH…LITA). ATP contacts are provided by residues arginine 86 and 140–145 (DLGGSS). The tract at residues 129–263 (DGSEKGDFIA…DYDANIVAVV (135 aa)) is hexokinase small subdomain 1. 140–147 (DLGGSSFR) contributes to the D-glucose 6-phosphate binding site. Residues serine 211, 228 to 229 (TK), and 264 to 265 (ND) each bind D-glucose. A hexokinase large subdomain 1 region spans residues 264–503 (NDTVGTMMTC…SDVRFLLSES (240 aa)). D-glucose 6-phosphate-binding residues include aspartate 265 and threonine 288. Residues asparagine 291, glutamate 316, and 347-350 (QLFE) each bind D-glucose. Phosphoserine is present on serine 393. Residue 469–471 (DGS) participates in D-glucose 6-phosphate binding. Residue 481 to 482 (RR) coordinates ATP. D-glucose 6-phosphate contacts are provided by residues serine 505 and 588 to 592 (DLGGT). Residues 577-711 (DGTEHGDFLA…EFDLDVVAVV (135 aa)) form a hexokinase small subdomain 2 region. ATP is bound at residue 588-593 (DLGGTN). Residues 659-660 (SF), 676-677 (TK), and 712-713 (ND) each bind D-glucose. Positions 712 to 951 (NDTVGTMMTC…CTVSFLLSED (240 aa)) are hexokinase large subdomain 2. D-glucose 6-phosphate contacts are provided by aspartate 713 and threonine 736. Position 736 (threonine 736) interacts with ATP. D-glucose contacts are provided by residues 738 to 739 (SN), glutamate 764, and glutamate 798. ATP-binding positions include 803–804 (GM), 840–844 (TKFLS), and 919–923 (TLYKL). Residues 917–919 (DGT) and serine 953 each bind D-glucose 6-phosphate.

The protein belongs to the hexokinase family. In terms of assembly, monomer. Interacts with RABL2/RABL2A; binds preferentially to GTP-bound RABL2. Interacts with VDAC1. The HK1-VDAC1 complex interacts with ATF2. Interacts (via N-terminal spermatogenic cell-specific region) with PFKM isoform 2 and isoform 3 (via C-terminus). Interacts with SMAD5. Tyrosine-phosphorylated. In rapidly growing tumor cells exhibiting high glucose catabolic rates, isoform HK1 is markedly elevated. Isoform HK1-SA, isoform HK1-SB and isoform HK1-SC are found only in spermatogenic cells. Isoform HK1-SC is detected in round spermatids, condensing spermatids and mature sperm where it is found in the head membranes, mitochondria of the midpiece and the fibrous sheath of the flagellum. Expressed within the principal piece and midpiece of sperm tail (at protein level).

Its subcellular location is the mitochondrion outer membrane. It is found in the cytoplasm. The protein localises to the cytosol. The protein resides in the membrane. The catalysed reaction is a D-hexose + ATP = a D-hexose 6-phosphate + ADP + H(+). It catalyses the reaction D-fructose + ATP = D-fructose 6-phosphate + ADP + H(+). The enzyme catalyses D-glucose + ATP = D-glucose 6-phosphate + ADP + H(+). It carries out the reaction D-mannose + ATP = D-mannose 6-phosphate + ADP + H(+). The catalysed reaction is D-glucosamine + ATP = D-glucosamine 6-phosphate + ADP + H(+). It participates in carbohydrate metabolism; hexose metabolism. Its pathway is carbohydrate degradation; glycolysis; D-glyceraldehyde 3-phosphate and glycerone phosphate from D-glucose: step 1/4. Its activity is regulated as follows. Hexokinase is an allosteric enzyme inhibited by its product D-glucose 6-phosphate. Hexokinase activity is inhibited by N-acetyl-D-glucosamine. Its function is as follows. Catalyzes the phosphorylation of various hexoses, such as D-glucose, D-glucosamine, D-fructose, D-mannose and 2-deoxy-D-glucose, to hexose 6-phosphate (D-glucose 6-phosphate, D-glucosamine 6-phosphate, D-fructose 6-phosphate, D-mannose 6-phosphate and 2-deoxy-D-glucose 6-phosphate, respectively). Does not phosphorylate N-acetyl-D-glucosamine. Mediates the initial step of glycolysis by catalyzing phosphorylation of D-glucose to D-glucose 6-phosphate. Involved in innate immunity and inflammation by acting as a pattern recognition receptor for bacterial peptidoglycan. When released in the cytosol, N-acetyl-D-glucosamine component of bacterial peptidoglycan inhibits the hexokinase activity of HK1 and causes its dissociation from mitochondrial outer membrane, thereby activating the NLRP3 inflammasome. In Mus musculus (Mouse), this protein is Hexokinase-1.